The primary structure comprises 101 residues: MAKSSMKAREVKRAKLVAKFAEKRLALKAIINNPTTSDDDRWDAVLKLQGLPRDSSAARQRNRCSQTGRPHGYLRKFGLSRIKLREATMRGEVPGLRKASW.

Belongs to the universal ribosomal protein uS14 family. As to quaternary structure, part of the 30S ribosomal subunit. Contacts proteins S3 and S10.

Its function is as follows. Binds 16S rRNA, required for the assembly of 30S particles and may also be responsible for determining the conformation of the 16S rRNA at the A site. The sequence is that of Small ribosomal subunit protein uS14 from Shewanella woodyi (strain ATCC 51908 / MS32).